Consider the following 493-residue polypeptide: Stage V sporulation protein AF (493 aa).

5 helical membrane-spanning segments follow: residues 296–316 (FFGI…VLQP), 334–354 (IPII…RMAA), 363–383 (TAMG…VGLF), 387–407 (VILY…YELS), and 418–438 (MILV…VLII).

Belongs to the GerABKA family.

The protein resides in the cell membrane. The polypeptide is Stage V sporulation protein AF (spoVAF) (Bacillus subtilis (strain 168)).